The chain runs to 461 residues: Histone acetyltransferase KAT5 (461 aa).

Residues 8–65 enclose the Tudor-knot domain; sequence IEGCRLPVLRRNQDNEDEWPLAEILSVKDISGRKLFYVHYIDFNKRLDEWVTHERLDL. Lys-52 is subject to N6-acetyllysine. Residues 70–168 are disordered; sequence FPKKEAKTPT…RMTGSLVSDR (99 aa). 2 positions are modified to phosphoserine: Ser-86 and Ser-90. Positions 90-100 are enriched in basic and acidic residues; it reads SPEREVKRKVE. 4 positions are modified to N6-acetyllysine; by autocatalysis: Lys-96, Lys-98, Lys-135, and Lys-137. Ser-147 carries the post-translational modification Phosphoserine. The region spanning 175 to 452 is the MYST-type HAT domain; the sequence is TRMKNIECIE…IDSKCLHFTP (278 aa). The C2HC MYST-type zinc finger occupies 208–233; it reads LYLCEFCLKYGRSLKCLQRHLTKCDL. Lys-275 bears the N6-acetyllysine; by autocatalysis mark. Positions 316-461 are interaction with ATF2; it reads ACILTLPPYQ…PKDWSKRGKW (146 aa). Acetyl-CoA contacts are provided by residues 318–320 and 325–331; these read ILT and QRRGYGK. The active-site Proton donor/acceptor is Glu-351. Residues Ser-355 and Ser-364 each contribute to the acetyl-CoA site. Residue Lys-378 forms a Glycyl lysine isopeptide (Lys-Gly) (interchain with G-Cter in SUMO1); alternate linkage. A Glycyl lysine isopeptide (Lys-Gly) (interchain with G-Cter in SUMO2); alternate cross-link involves residue Lys-378. Lys-399 participates in a covalent cross-link: Glycyl lysine isopeptide (Lys-Gly) (interchain with G-Cter in SUMO1).

It belongs to the MYST (SAS/MOZ) family. As to quaternary structure, component of the NuA4 histone acetyltransferase complex which contains the catalytic subunit KAT5/TIP60 and the subunits EP400, TRRAP/PAF400, BRD8/SMAP, EPC1, DMAP1/DNMAP1, RUVBL1/TIP49, RUVBL2, ING3, actin, ACTL6A/BAF53A, MORF4L1/MRG15, MORF4L2/MRGX, MRGBP, YEATS4/GAS41, VPS72/YL1 and MEAF6. KAT5/TIP60, EPC1, and ING3 together constitute a minimal HAT complex termed Piccolo NuA4. The NuA4 complex interacts with MYC. Interacts with ATM. Interacts with JADE1. Interacts with PLA2G4A/CPLA2, EDNRA and HDAC7. Interacts with the cytoplasmic tail of APP and APBB1/FE65. Interacts with TRIM24 and TRIM68. Forms a complex with SENP6 and UBE2I in response to UV irradiation. Identified in a complex with HINT1. Interacts with ATF2 and CUL3. Interacts with NR1D2 (via N-terminus). Component of a SWR1-like complex. Interacts with FOXP3. Interacts with ZBTB49. Interacts with SRF. Interacts with ATF3; promoting autoacetylation and deubiquitination by USP7. Interacts with EP300/p300; interaction promotes KAT5 autoacetylation. Interacts with PRKDC; interaction is impaired following KAT5 sumoylation. Interacts with GPR50. Post-translationally, phosphorylated on Ser-86 and Ser-90; enhanced during G2/M phase. The phosphorylated form has a higher activity. Phosphorylation at Ser-90 by CDK1 or CDK9 is a prerequisite for phosphorylation at Ser-86 by GSK3. Phosphorylation at Ser-86 by GSK3 (GSK3A or GSK3B) activates acetyltransferase and acyltransferase activities. Phosphorylation at Ser-90 by CDK9 promotes KAT5 recruitment to chromatin. Phosphorylation by VRK1 following DNA damage promotes KAT5 association with chromatin and histone acetyltransferase activity. In terms of processing, autoacetylated. Autoacetylation is required for histone acetyltransferase activity. Autoacetylation at Lys-275 is facilitated by interaction with EP300/p300: it prevents ubiquitination and subsequent degradation by the proteasome and promotes acetylation of target proteins. Deacetylated by HDAC3 and SIRT1. Deacetylation by HDAC3 promotes its ubiquitination and cytoplasmic localization. Sumoylated by UBE2I at Lys-378 and Lys-399, leading to increase of its histone acetyltransferase activity in UV-induced DNA damage response, as well as its translocation to nuclear bodies. Sumoylation with SUMO2 by PIAS4 at Lys-378 promotes repair of DNA double-strand breaks (DSBs) via homologous recombination (HR). Sumoylation by PIAS4 impairs interaction with PRKDC, inhibiting non-homologous end joining (NHEJ)-mediated repair of DSBs, thereby facilitating HR. Desumoylated by SENP3. Post-translationally, ubiquitinated by MDM2, leading to its proteasome-dependent degradation. Ubiquitination is prevented by autoacetylation at Lys-275. Ubiquitinated following deacetylation by HDAC3, leading to cytoplasmic localization. Deubiquitinated by USP7 following interaction with ATF3, promoting its stabilization.

Its subcellular location is the nucleus. It localises to the chromosome. The protein localises to the cytoplasm. The protein resides in the centromere. It is found in the kinetochore. Its subcellular location is the cytoskeleton. It localises to the spindle pole. The protein localises to the nucleolus. The protein resides in the perinuclear region. The enzyme catalyses L-lysyl-[histone] + acetyl-CoA = N(6)-acetyl-L-lysyl-[histone] + CoA + H(+). It carries out the reaction L-lysyl-[protein] + acetyl-CoA = N(6)-acetyl-L-lysyl-[protein] + CoA + H(+). The catalysed reaction is (2E)-butenoyl-CoA + L-lysyl-[protein] = N(6)-(2E)-butenoyl-L-lysyl-[protein] + CoA + H(+). It catalyses the reaction 2-hydroxyisobutanoyl-CoA + L-lysyl-[protein] = N(6)-(2-hydroxyisobutanoyl)-L-lysyl-[protein] + CoA + H(+). The enzyme catalyses (S)-lactoyl-CoA + L-lysyl-[protein] = N(6)-[(S)-lactoyl]-L-lysyl-[protein] + CoA + H(+). Acyltransferase and acetyltransferase activities are activated by phosphorylation and autoacetylation. Autoacetylation activates the histone acetyltransferase activity. Catalytic subunit of the NuA4 histone acetyltransferase complex, a multiprotein complex involved in transcriptional activation of select genes principally by acetylation of nucleosomal histones H2A and H4. Histone acetylation alters nucleosome-DNA interactions and promotes interaction of the modified histones with other proteins which positively regulate transcription. The NuA4 histone acetyltransferase complex is required for the activation of transcriptional programs associated with proto-oncogene mediated growth induction, tumor suppressor mediated growth arrest and replicative senescence, apoptosis, and DNA repair. The NuA4 complex plays a direct role in repair of DNA double-strand breaks (DSBs) by promoting homologous recombination (HR): the complex inhibits TP53BP1 binding to chromatin via MBTD1, which recognizes and binds histone H4 trimethylated at 'Lys-20' (H4K20me), and KAT5 that catalyzes acetylation of 'Lys-15' of histone H2A (H2AK15ac), thereby blocking the ubiquitination mark required for TP53BP1 localization at DNA breaks. Also involved in DSB repair by mediating acetylation of 'Lys-5' of histone H2AX (H2AXK5ac), promoting NBN/NBS1 assembly at the sites of DNA damage. The NuA4 complex plays a key role in hematopoietic stem cell maintenance and is required to maintain acetylated H2A.Z/H2AZ1 at MYC target genes. The NuA4 complex is also required for spermatid development by promoting acetylation of histones: histone hyperacetylation is required for histone replacement during the transition from round to elongating spermatids. Component of a SWR1-like complex that specifically mediates the removal of histone H2A.Z/H2AZ1 from the nucleosome. Also acetylates non-histone proteins, such as BMAL1, ATM, AURKB, CHKA, CGAS, ERCC4/XPF, LPIN1, TP53/p53, NDC80/HEC1, NR1D2, RAN, SOX4, FOXP3, SQSTM1, ULK1 and RUBCNL/Pacer. Directly acetylates and activates ATM. Promotes nucleotide excision repair (NER) by mediating acetylation of ERCC4/XPF, thereby promoting formation of the ERCC4-ERCC1 complex. Relieves NR1D2-mediated inhibition of APOC3 expression by acetylating NR1D2. Acts as a regulator of regulatory T-cells (Treg) by catalyzing FOXP3 acetylation, thereby promoting FOXP3 transcriptional repressor activity. Involved in skeletal myoblast differentiation by mediating acetylation of SOX4. Catalyzes acetylation of APBB1/FE65, increasing its transcription activator activity. Promotes transcription elongation during the activation phase of the circadian cycle by catalyzing acetylation of BMAL1, promoting elongation of circadian transcripts. Together with GSK3 (GSK3A or GSK3B), acts as a regulator of autophagy: phosphorylated at Ser-86 by GSK3 under starvation conditions, leading to activate acetyltransferase activity and promote acetylation of key autophagy regulators, such as ULK1 and RUBCNL/Pacer. Acts as a regulator of the cGAS-STING innate antiviral response by catalyzing acetylation the N-terminus of CGAS, thereby promoting CGAS DNA-binding and activation. Also regulates lipid metabolism by mediating acetylation of CHKA or LPIN1. Promotes lipolysis of lipid droplets following glucose deprivation by mediating acetylation of isoform 1 of CHKA, thereby promoting monomerization of CHKA and its conversion into a tyrosine-protein kinase. Acts as a regulator of fatty-acid-induced triacylglycerol synthesis by catalyzing acetylation of LPIN1, thereby promoting the synthesis of diacylglycerol. In addition to protein acetyltransferase, can use different acyl-CoA substrates, such as (2E)-butenoyl-CoA (crotonyl-CoA), S-lactoyl-CoA (lactyl-CoA) and 2-hydroxyisobutanoyl-CoA (2-hydroxyisobutyryl-CoA), and is able to mediate protein crotonylation, lactylation and 2-hydroxyisobutyrylation, respectively. Acts as a key regulator of chromosome segregation and kinetochore-microtubule attachment during mitosis by mediating acetylation or crotonylation of target proteins. Catalyzes acetylation of AURKB at kinetochores, increasing AURKB activity and promoting accurate chromosome segregation in mitosis. Acetylates RAN during mitosis, promoting microtubule assembly at mitotic chromosomes. Acetylates NDC80/HEC1 during mitosis, promoting robust kinetochore-microtubule attachment. Catalyzes crotonylation of MAPRE1/EB1, thereby ensuring accurate spindle positioning in mitosis. Catalyzes lactylation of NBN/NBS1 in response to DNA damage, thereby promoting DNA double-strand breaks (DSBs) via homologous recombination (HR). This is Histone acetyltransferase KAT5 from Pongo abelii (Sumatran orangutan).